The chain runs to 350 residues: Uroporphyrinogen decarboxylase (350 aa).

Substrate is bound by residues 28-32, aspartate 78, tyrosine 155, serine 210, and histidine 325; that span reads RQAGR.

It belongs to the uroporphyrinogen decarboxylase family. As to quaternary structure, homodimer.

It localises to the cytoplasm. It carries out the reaction uroporphyrinogen III + 4 H(+) = coproporphyrinogen III + 4 CO2. It functions in the pathway porphyrin-containing compound metabolism; protoporphyrin-IX biosynthesis; coproporphyrinogen-III from 5-aminolevulinate: step 4/4. Its function is as follows. Catalyzes the decarboxylation of four acetate groups of uroporphyrinogen-III to yield coproporphyrinogen-III. The polypeptide is Uroporphyrinogen decarboxylase (Microcystis aeruginosa (strain NIES-843 / IAM M-2473)).